The chain runs to 481 residues: uncharacterized protein (481 aa).

A helical transmembrane segment spans residues 18–38; sequence FMIVTAIAVAIFVVITGVVIF.

Its subcellular location is the cell inner membrane. Involved in DNA conjugation in the recipient strain. This is an uncharacterized protein from Mycolicibacterium smegmatis (strain MKD8) (Mycobacterium smegmatis).